A 235-amino-acid polypeptide reads, in one-letter code: MTELARLKFYATQPHTCSYLPEEQATTLFLDPSQPMDVQVYADLSDMGFRRSGDHLYRPHCQNCSACVPARIPVNLFVPDRQQKRILKRNADVQVQSARPAFTEEYFDLYQRYIEQRHADGDMFPPSREQFSTFLVRDLPFSRFYEFRVDQRLLAVAVTDLLPNGLSAVYTFYEPDEERRSLGRYAILWQIAEAARLQLQAVYLGYWIKNCKKMNYKTQYRPIELLTNQRWVTLY.

This sequence belongs to the R-transferase family. Bpt subfamily.

Its subcellular location is the cytoplasm. The catalysed reaction is N-terminal L-glutamyl-[protein] + L-leucyl-tRNA(Leu) = N-terminal L-leucyl-L-glutamyl-[protein] + tRNA(Leu) + H(+). It catalyses the reaction N-terminal L-aspartyl-[protein] + L-leucyl-tRNA(Leu) = N-terminal L-leucyl-L-aspartyl-[protein] + tRNA(Leu) + H(+). Functionally, functions in the N-end rule pathway of protein degradation where it conjugates Leu from its aminoacyl-tRNA to the N-termini of proteins containing an N-terminal aspartate or glutamate. This chain is Aspartate/glutamate leucyltransferase, found in Pseudomonas savastanoi pv. phaseolicola (strain 1448A / Race 6) (Pseudomonas syringae pv. phaseolicola (strain 1448A / Race 6)).